The primary structure comprises 346 residues: D-alanine--D-alanine ligase (346 aa).

The ATP-grasp domain maps to Lys-133–Glu-326. Tyr-159–Tyr-209 serves as a coordination point for ATP. 3 residues coordinate Mg(2+): Asp-282, Glu-294, and Asn-296.

Belongs to the D-alanine--D-alanine ligase family. Mg(2+) serves as cofactor. It depends on Mn(2+) as a cofactor.

It is found in the cytoplasm. The enzyme catalyses 2 D-alanine + ATP = D-alanyl-D-alanine + ADP + phosphate + H(+). It functions in the pathway cell wall biogenesis; peptidoglycan biosynthesis. In terms of biological role, cell wall formation. The chain is D-alanine--D-alanine ligase from Campylobacter concisus (strain 13826).